Reading from the N-terminus, the 291-residue chain is Lys-63-specific deubiquitinase BRCC36 (291 aa).

Position 2 is an N-acetylalanine (alanine 2). Residues 12-179 (VHLESDAFLV…YTCFQSIQAQ (168 aa)) enclose the MPN domain. Positions 122, 124, and 135 each coordinate Zn(2+). The short motif at 122–135 (HSHPHITVWPSHVD) is the JAMM motif element. Serine 233 is subject to Phosphoserine.

The protein belongs to the peptidase M67A family. BRCC36 subfamily. As to quaternary structure, component of the ARISC complex, at least composed of UIMC1/RAP80, ABRAXAS1, BRCC3/BRCC36, BABAM2 and BABAM1/NBA1. Component of the BRCA1-A complex, at least composed of BRCA1, BARD1, UIMC1/RAP80, ABRAXAS1, BRCC3/BRCC36, BABAM2 and BABAM1/NBA1. In the BRCA1-A complex, interacts directly with ABRAXAS1 and BABAM2. Component of the BRISC complex, at least composed of ABRAXAS2, BRCC3/BRCC36, BABAM2 and BABAM1/NBA1. Identified in a complex with SHMT2 and the other subunits of the BRISC complex. In the BRISC complex, interacts directly with ABRAXAS2. Identified in a complex with ABRAXAS2 and NUMA1. The BRISC complex interacts with the CSN complex. Component of the BRCA1/BRCA2 containing complex (BRCC), which also contains BRCA1, BRCA2, BARD1, BABAM2 and RAD51. BRCC is a ubiquitin E3 ligase complex that enhances cellular survival following DNA damage. Interacts with BRCA1. Binds polyubiquitin. Interacts with PWWP2B. Interacts with HDAC1; this interaction is enhanced in the presence of PWWP2B. Zn(2+) serves as cofactor.

Its subcellular location is the nucleus. It is found in the cytoplasm. It localises to the cytoskeleton. The protein localises to the spindle pole. Metalloprotease that specifically cleaves 'Lys-63'-linked polyubiquitin chains. Does not have activity toward 'Lys-48'-linked polyubiquitin chains. Component of the BRCA1-A complex, a complex that specifically recognizes 'Lys-63'-linked ubiquitinated histones H2A and H2AX at DNA lesions sites, leading to target the BRCA1-BARD1 heterodimer to sites of DNA damage at double-strand breaks (DSBs). In the BRCA1-A complex, it specifically removes 'Lys-63'-linked ubiquitin on histones H2A and H2AX, antagonizing the RNF8-dependent ubiquitination at double-strand breaks (DSBs). Catalytic subunit of the BRISC complex, a multiprotein complex that specifically cleaves 'Lys-63'-linked ubiquitin in various substrates. Mediates the specific 'Lys-63'-specific deubiquitination associated with the COP9 signalosome complex (CSN), via the interaction of the BRISC complex with the CSN complex. The BRISC complex is required for normal mitotic spindle assembly and microtubule attachment to kinetochores via its role in deubiquitinating NUMA1. Plays a role in interferon signaling via its role in the deubiquitination of the interferon receptor IFNAR1; deubiquitination increases IFNAR1 activity by enhancing its stability and cell surface expression. Acts as a regulator of the NLRP3 inflammasome by mediating deubiquitination of NLRP3, leading to NLRP3 inflammasome assembly. Down-regulates the response to bacterial lipopolysaccharide (LPS) via its role in IFNAR1 deubiquitination. Deubiquitinates HDAC1 and PWWP2B leading to their stabilization. This Mus musculus (Mouse) protein is Lys-63-specific deubiquitinase BRCC36 (Brcc3).